The primary structure comprises 530 residues: Ubiquitin carboxyl-terminal hydrolase 17-like protein 11 (530 aa).

The region spanning 80 to 375 (AGLQNMGNTC…QAYVLFYIQK (296 aa)) is the USP domain. Residue C89 is the Nucleophile of the active site. H334 functions as the Proton acceptor in the catalytic mechanism. Basic and acidic residues-rich tracts occupy residues 382–392 (SESVSRGREPR) and 398–413 (DTDRRATQGELKRDHP). 2 disordered regions span residues 382 to 413 (SESVSRGREPRALGAEDTDRRATQGELKRDHP) and 509 to 530 (RGRARRSKGKNKHSKRALLVCQ). Residues 510–524 (GRARRSKGKNKHSKR) are compositionally biased toward basic residues.

The protein belongs to the peptidase C19 family. USP17 subfamily.

It localises to the nucleus. It is found in the endoplasmic reticulum. It carries out the reaction Thiol-dependent hydrolysis of ester, thioester, amide, peptide and isopeptide bonds formed by the C-terminal Gly of ubiquitin (a 76-residue protein attached to proteins as an intracellular targeting signal).. Functionally, deubiquitinating enzyme that removes conjugated ubiquitin from specific proteins to regulate different cellular processes that may include cell proliferation, progression through the cell cycle, apoptosis, cell migration, and the cellular response to viral infection. This chain is Ubiquitin carboxyl-terminal hydrolase 17-like protein 11 (USP17L11), found in Homo sapiens (Human).